A 538-amino-acid chain; its full sequence is uncharacterized protein (538 aa).

The first 17 residues, 1–17 (MNLQILLLLLLFCHVAA), serve as a signal peptide directing secretion. N-linked (GlcNAc...) asparagine glycosylation is present at Asn-115.

This is an uncharacterized protein from Caenorhabditis elegans.